The sequence spans 513 residues: Probable G-protein coupled receptor Mth-like 9 (513 aa).

The N-terminal stretch at 1-19 (MVSPLIILLIIWLSVGAKS) is a signal peptide. Over 20–207 (VEIASINHPC…NCERFQTGYR (188 aa)) the chain is Extracellular. 4 cysteine pairs are disulfide-bonded: Cys-29-Cys-82, Cys-84-Cys-89, Cys-93-Cys-181, and Cys-94-Cys-107. Residue Asn-36 is glycosylated (N-linked (GlcNAc...) asparagine). Residues Asn-106, Asn-125, and Asn-165 are each glycosylated (N-linked (GlcNAc...) asparagine). Residues 208–228 (VWIYAICSIIAIIINIFILSL) form a helical membrane-spanning segment. Topologically, residues 229 to 242 (LGSVRDARKSHYGQ) are cytoplasmic. The chain crosses the membrane as a helical span at residues 243–263 (LIIYYLLSMIVGYSLLVYLAL). Topologically, residues 264–276 (KNPMKLSHVACRN) are extracellular. Residues 277-297 (IGFLAYFCIMLSFVFLAICSL) form a helical membrane-spanning segment. Residues 298–314 (DFLLKFKQKAVRSSVRR) lie on the Cytoplasmic side of the membrane. The chain crosses the membrane as a helical span at residues 315–335 (LSLALAVLAVIGLRFLVSLAQ). Residues 336–360 (DSKLPKHFKPGMGEDYCWFDVRTWG) lie on the Extracellular side of the membrane. Residues 361–381 (ILIYYYGPIALLLIFSIVCCL) form a helical membrane-spanning segment. At 382–403 (KAYFSIYELPPDTQYILGTQLK) the chain is on the cytoplasmic side. A helical membrane pass occupies residues 404–424 (IVKTHFYAFSAYIVGVFAVWI). The Extracellular segment spans residues 425 to 438 (REIVVYIMARVREH). Residues 439-459 (FFIIDFWSGICILGLAIAGFI) traverse the membrane as a helical segment. Over 460 to 513 (LLLGKNLHVKSWWAINVESSQTDLSIINARVYKFDEKGDLKSSDSPYKPTVTSL) the chain is Cytoplasmic.

It belongs to the G-protein coupled receptor 2 family. Mth subfamily.

Its subcellular location is the cell membrane. The protein is Probable G-protein coupled receptor Mth-like 9 (mthl9) of Drosophila melanogaster (Fruit fly).